The primary structure comprises 64 residues: Small ribosomal subunit protein bS21 (64 aa).

Residues 37 to 64 (EKPSVKRKRKEKEAQRRLRKKMRMMKKA) are disordered. Residues 53–64 (RLRKKMRMMKKA) show a composition bias toward basic residues.

The protein belongs to the bacterial ribosomal protein bS21 family.

In Syntrophotalea carbinolica (strain DSM 2380 / NBRC 103641 / GraBd1) (Pelobacter carbinolicus), this protein is Small ribosomal subunit protein bS21.